The following is a 305-amino-acid chain: UDP-N-acetylenolpyruvoylglucosamine reductase 2 (305 aa).

The region spanning 33-197 (VGGKADVFVA…LEARFELEEG (165 aa)) is the FAD-binding PCMH-type domain. The active site involves Arg-176. Ser-226 acts as the Proton donor in catalysis. Glu-296 is a catalytic residue.

Belongs to the MurB family. It depends on FAD as a cofactor.

The protein resides in the cytoplasm. The catalysed reaction is UDP-N-acetyl-alpha-D-muramate + NADP(+) = UDP-N-acetyl-3-O-(1-carboxyvinyl)-alpha-D-glucosamine + NADPH + H(+). It functions in the pathway cell wall biogenesis; peptidoglycan biosynthesis. Functionally, cell wall formation. This is UDP-N-acetylenolpyruvoylglucosamine reductase 2 from Bacillus cereus (strain ZK / E33L).